The following is a 402-amino-acid chain: Bisdemethoxycurcumin synthase (402 aa).

Cys174 (acyl-thioester intermediate) is an active-site residue.

This sequence belongs to the thiolase-like superfamily. Chalcone/stilbene synthases family. In terms of assembly, homodimer.

It catalyses the reaction 2 4-coumaroyl-CoA + malonyl-CoA + H2O + H(+) = bisdemethoxycurcumin + 2 CO2 + 3 CoA. It functions in the pathway secondary metabolite biosynthesis; flavonoid biosynthesis. Functionally, plant-specific type III polyketide synthase (PKS) that catalyzes the one-pot formation of the C6-C7-C6 diarylheptanoid scaffold of bisdemethoxycurcumin by the condensation of two molecules of 4-coumaroyl-CoA and one molecule of malonyl-CoA. In Oryza sativa subsp. japonica (Rice), this protein is Bisdemethoxycurcumin synthase.